We begin with the raw amino-acid sequence, 140 residues long: Nucleoside diphosphate kinase (140 aa).

Residues Lys11, Phe59, Arg87, Thr93, Arg104, and Asn114 each contribute to the ATP site. His117 serves as the catalytic Pros-phosphohistidine intermediate.

The protein belongs to the NDK family. Homotetramer. Mg(2+) is required as a cofactor.

The protein resides in the cytoplasm. The enzyme catalyses a 2'-deoxyribonucleoside 5'-diphosphate + ATP = a 2'-deoxyribonucleoside 5'-triphosphate + ADP. It carries out the reaction a ribonucleoside 5'-diphosphate + ATP = a ribonucleoside 5'-triphosphate + ADP. Its function is as follows. Major role in the synthesis of nucleoside triphosphates other than ATP. The ATP gamma phosphate is transferred to the NDP beta phosphate via a ping-pong mechanism, using a phosphorylated active-site intermediate. The chain is Nucleoside diphosphate kinase from Brucella canis (strain ATCC 23365 / NCTC 10854 / RM-666).